The chain runs to 155 residues: Superoxide dismutase [Cu-Zn] (155 aa).

Residues His-47, His-49, and His-64 each contribute to the Cu cation site. Cys-58 and Cys-147 form a disulfide bridge. His-64, His-72, His-81, and Asp-84 together coordinate Zn(2+). His-121 contacts Cu cation. A substrate-binding site is contributed by Arg-144.

The protein belongs to the Cu-Zn superoxide dismutase family. As to quaternary structure, homodimer. Requires Cu cation as cofactor. It depends on Zn(2+) as a cofactor.

It is found in the cytoplasm. It catalyses the reaction 2 superoxide + 2 H(+) = H2O2 + O2. In terms of biological role, destroys radicals which are normally produced within the cells and which are toxic to biological systems. The polypeptide is Superoxide dismutase [Cu-Zn] (SOD1) (Kluyveromyces lactis (strain ATCC 8585 / CBS 2359 / DSM 70799 / NBRC 1267 / NRRL Y-1140 / WM37) (Yeast)).